A 361-amino-acid polypeptide reads, in one-letter code: Salt tolerance receptor-like cytoplasmic kinase 1 (361 aa).

Residues C5, C10, and C14 are each lipidated (S-palmitoyl cysteine). In terms of domain architecture, Protein kinase spans 67–347; sequence GFSSRVIGHG…RALQEKTSAL (281 aa). Residues 73 to 81 and K95 each bind ATP; that span reads IGHGGFSTV. Catalysis depends on D195, which acts as the Proton acceptor.

It belongs to the protein kinase superfamily. Ser/Thr protein kinase family. Self-interacts. Interacts with CATA, CATB and CATC at the plasma membrane. Post-translationally, palmitoylated. Palmotylation at Cys-5, Cys-10 and Cys-14 by DHHC9 is required for plasma membrane targeting and STRK1 function. In terms of processing, autophosphorylated. As to expression, accumulates in seeds. Mainly expressed in young roots, and, to a lower extent, in leaf veins, seedlings, stems, leaf sheath and young spikelet.

It localises to the cell membrane. The enzyme catalyses L-seryl-[protein] + ATP = O-phospho-L-seryl-[protein] + ADP + H(+). It carries out the reaction L-threonyl-[protein] + ATP = O-phospho-L-threonyl-[protein] + ADP + H(+). It catalyses the reaction L-tyrosyl-[protein] + ATP = O-phospho-L-tyrosyl-[protein] + ADP + H(+). Its function is as follows. Acts probably as a dual specificity protein kinase. Regulates hydrogen peroxide (H(2)O(2)) homeostasis and improves salt tolerance by phosphorylating tyrosine residues of CATC thus activating its catalase activity. Promotes growth at the seedling stage and prevents grain yield loss under salt stress conditions. This chain is Salt tolerance receptor-like cytoplasmic kinase 1, found in Oryza sativa subsp. japonica (Rice).